The chain runs to 220 residues: Large ribosomal subunit protein uL16 (220 aa).

This sequence belongs to the universal ribosomal protein uL16 family. As to quaternary structure, component of the small ribosomal subunit. Mature ribosomes consist of a small (40S) and a large (60S) subunit. The 40S subunit contains about 33 different proteins and 1 molecule of RNA (18S). The 60S subunit contains about 49 different proteins and 3 molecules of RNA (25S, 5.8S and 5S).

This is Large ribosomal subunit protein uL16 (RPL10) from Euphorbia esula (Leafy spurge).